Reading from the N-terminus, the 142-residue chain is Hemoglobin subunit alpha-C (142 aa).

N-acetylalanine is present on alanine 2. The Globin domain occupies 2–142; that stretch reads ALNCDDKAHI…VSGLLTSKYR (141 aa). Residue histidine 59 coordinates O2. Heme b is bound at residue histidine 88.

It belongs to the globin family. As to quaternary structure, heterotetramer of either two alpha-B chains or two alpha-C chains and two beta chains. The two major hemoglobins, B and C, associate upon deoxygenation to form a trimer of tetramers, BC2, that has a much lower affinity for oxygen than either component alone. In terms of tissue distribution, red blood cells.

In terms of biological role, the alpha-C chain is a component of adult hemoglobin C. The protein is Hemoglobin subunit alpha-C of Aquarana catesbeiana (American bullfrog).